Here is a 205-residue protein sequence, read N- to C-terminus: MSSEKSTSIEKLTKYYSLQVVSQERLYNFLPKINILGSDKVCCDFIHSLIDQICGKIISFDRFINDENQRIIYQLIRVYTLFINKVVGKDLKKEFICEDLKTSNVDNIYITAISDCIISRFQDIKKELTEKLSTISSSSLSDFDWKMNAILSSDRINIVQENVLLLNLTIETNINDKKEQVLIELSKKELDHILETFDQINEVSF.

The 67-residue stretch at 139–205 (SLSDFDWKMN…TFDQINEVSF (67 aa)) folds into the COMM domain.

It belongs to the COMM domain-containing protein 8 family. As to quaternary structure, component of the commander complex consisting of the CCC subcomplex and the retriever subcomplex. Component of the CCC subcomplex.

Functionally, scaffold protein in the commander complex that is essential for endosomal recycling of transmembrane cargos; the commander complex is composed of the CCC subcomplex and the retriever subcomplex. The protein is COMM domain-containing protein 8 (commd8) of Dictyostelium discoideum (Social amoeba).